The chain runs to 237 residues: Mitochondrial inner membrane protease atp23 (237 aa).

His136 contacts a divalent metal cation. Glu137 is an active-site residue. His140 lines the a divalent metal cation pocket.

Belongs to the peptidase M76 family.

The protein localises to the mitochondrion inner membrane. Its function is as follows. Has a dual role in the assembly of mitochondrial ATPase. Acts as a protease that removes N-terminal residues of mitochondrial ATPase CF(0) subunit 6 at the intermembrane space side. Also involved in the correct assembly of the membrane-embedded ATPase CF(0) particle, probably mediating association of subunit 6 with the subunit 9 ring. The sequence is that of Mitochondrial inner membrane protease atp23 (atp23) from Aspergillus clavatus (strain ATCC 1007 / CBS 513.65 / DSM 816 / NCTC 3887 / NRRL 1 / QM 1276 / 107).